The following is a 134-amino-acid chain: Small ribosomal subunit protein uS8c (134 aa).

Belongs to the universal ribosomal protein uS8 family. As to quaternary structure, part of the 30S ribosomal subunit.

The protein resides in the plastid. Its subcellular location is the chloroplast. Its function is as follows. One of the primary rRNA binding proteins, it binds directly to 16S rRNA central domain where it helps coordinate assembly of the platform of the 30S subunit. This chain is Small ribosomal subunit protein uS8c (rps8), found in Draba nemorosa (Woodland whitlowgrass).